The primary structure comprises 288 residues: Protease HtpX (288 aa).

The next 2 membrane-spanning stretches (helical) occupy residues 4 to 24 and 33 to 53; these read ILLF…ILTL and VGLL…SLLM. His-139 serves as a coordination point for Zn(2+). Glu-140 is an active-site residue. His-143 contacts Zn(2+). Helical transmembrane passes span 146-166 and 186-206; these read SGDM…VIFI and IYFM…SMIA. A Zn(2+)-binding site is contributed by Glu-214.

Belongs to the peptidase M48B family. The cofactor is Zn(2+).

The protein localises to the cell inner membrane. This Histophilus somni (strain 2336) (Haemophilus somnus) protein is Protease HtpX.